The primary structure comprises 260 residues: Proteasome subunit alpha (260 aa).

It belongs to the peptidase T1A family. As to quaternary structure, the 20S proteasome core is composed of 14 alpha and 14 beta subunits that assemble into four stacked heptameric rings, resulting in a barrel-shaped structure. The two inner rings, each composed of seven catalytic beta subunits, are sandwiched by two outer rings, each composed of seven alpha subunits. The catalytic chamber with the active sites is on the inside of the barrel. Has a gated structure, the ends of the cylinder being occluded by the N-termini of the alpha-subunits. Is capped at one or both ends by the proteasome regulatory ATPase, PAN.

It is found in the cytoplasm. The formation of the proteasomal ATPase PAN-20S proteasome complex, via the docking of the C-termini of PAN into the intersubunit pockets in the alpha-rings, triggers opening of the gate for substrate entry. Interconversion between the open-gate and close-gate conformations leads to a dynamic regulation of the 20S proteasome proteolysis activity. Component of the proteasome core, a large protease complex with broad specificity involved in protein degradation. This is Proteasome subunit alpha from Thermococcus onnurineus (strain NA1).